Reading from the N-terminus, the 296-residue chain is Glycine--tRNA ligase alpha subunit (296 aa).

Belongs to the class-II aminoacyl-tRNA synthetase family. Tetramer of two alpha and two beta subunits.

The protein localises to the cytoplasm. It carries out the reaction tRNA(Gly) + glycine + ATP = glycyl-tRNA(Gly) + AMP + diphosphate. This chain is Glycine--tRNA ligase alpha subunit, found in Desulfitobacterium hafniense (strain Y51).